The sequence spans 355 residues: Uroporphyrinogen decarboxylase (355 aa).

Residues 27–31, Asp-77, Tyr-154, Thr-209, and His-328 contribute to the substrate site; that span reads RQAGR.

Belongs to the uroporphyrinogen decarboxylase family. Homodimer.

It is found in the cytoplasm. It carries out the reaction uroporphyrinogen III + 4 H(+) = coproporphyrinogen III + 4 CO2. Its pathway is porphyrin-containing compound metabolism; protoporphyrin-IX biosynthesis; coproporphyrinogen-III from 5-aminolevulinate: step 4/4. Functionally, catalyzes the decarboxylation of four acetate groups of uroporphyrinogen-III to yield coproporphyrinogen-III. The sequence is that of Uroporphyrinogen decarboxylase from Aliivibrio fischeri (strain ATCC 700601 / ES114) (Vibrio fischeri).